A 164-amino-acid chain; its full sequence is Phosphopantetheine adenylyltransferase (164 aa).

Residue serine 10 participates in substrate binding. Residues 10–11 (SF) and histidine 18 each bind ATP. Lysine 42, leucine 74, and arginine 88 together coordinate substrate. ATP contacts are provided by residues 89–91 (GLR), glutamate 99, and 124–130 (YSFLSSS).

Belongs to the bacterial CoaD family. As to quaternary structure, homohexamer. The cofactor is Mg(2+).

The protein resides in the cytoplasm. It carries out the reaction (R)-4'-phosphopantetheine + ATP + H(+) = 3'-dephospho-CoA + diphosphate. It functions in the pathway cofactor biosynthesis; coenzyme A biosynthesis; CoA from (R)-pantothenate: step 4/5. Its function is as follows. Reversibly transfers an adenylyl group from ATP to 4'-phosphopantetheine, yielding dephospho-CoA (dPCoA) and pyrophosphate. In Exiguobacterium sibiricum (strain DSM 17290 / CCUG 55495 / CIP 109462 / JCM 13490 / 255-15), this protein is Phosphopantetheine adenylyltransferase.